The following is a 312-amino-acid chain: Small ribosomal subunit protein uS2 (312 aa).

This sequence belongs to the universal ribosomal protein uS2 family. As to quaternary structure, component of the small ribosomal subunit. Mature ribosomes consist of a small (40S) and a large (60S) subunit. The 40S subunit contains about 33 different proteins and 1 molecule of RNA (18S). The 60S subunit contains about 49 different proteins and 3 molecules of RNA (25S, 5.8S and 5S). Interacts with ribosomal protein S21.

The protein localises to the cytoplasm. Its function is as follows. Required for the assembly and/or stability of the 40S ribosomal subunit. Required for the processing of the 20S rRNA-precursor to mature 18S rRNA in a late step of the maturation of 40S ribosomal subunits. The sequence is that of Small ribosomal subunit protein uS2 from Vitis vinifera (Grape).